The sequence spans 232 residues: Large ribosomal subunit protein uL1 (232 aa).

The protein belongs to the universal ribosomal protein uL1 family. In terms of assembly, part of the 50S ribosomal subunit.

In terms of biological role, binds directly to 23S rRNA. The L1 stalk is quite mobile in the ribosome, and is involved in E site tRNA release. Its function is as follows. Protein L1 is also a translational repressor protein, it controls the translation of the L11 operon by binding to its mRNA. The sequence is that of Large ribosomal subunit protein uL1 from Roseobacter denitrificans (strain ATCC 33942 / OCh 114) (Erythrobacter sp. (strain OCh 114)).